Reading from the N-terminus, the 95-residue chain is Putative septation protein SpoVG (95 aa).

The protein belongs to the SpoVG family.

Functionally, could be involved in septation. This is Putative septation protein SpoVG from Clostridium acetobutylicum (strain ATCC 824 / DSM 792 / JCM 1419 / IAM 19013 / LMG 5710 / NBRC 13948 / NRRL B-527 / VKM B-1787 / 2291 / W).